The primary structure comprises 1256 residues: Nephrin (1256 aa).

Positions 1 to 35 are cleaved as a signal peptide; it reads MGAKEATVRGPGASPVHRTCHLIPLLLAGMLTTGL. At 36–1078 the chain is on the extracellular side; that stretch reads AQSPVPTSAP…PGPPRLPLLP (1043 aa). 6 consecutive Ig-like C2-type domains span residues 39-144, 149-247, 256-347, 354-448, 454-554, and 558-649; these read PVPT…VILS, PKVL…ASFT, PPVI…RSIT, PSAV…KSLT, PAQK…TQLV, and PPTN…ETVS. An N-linked (GlcNAc...) asparagine glycan is attached at Asn-54. Cystine bridges form between Cys-67/Cys-125, Cys-174/Cys-231, and Cys-279/Cys-331. N-linked (GlcNAc...) asparagine glycans are attached at residues Asn-370 and Asn-415. Cys-375 and Cys-431 are oxidised to a cystine. Position 446 is a phosphoserine (Ser-446). Cys-479 and Cys-542 are disulfide-bonded. The interval 491 to 516 is disordered; that stretch reads TWLKDSRPVNDPRQSQEPRRVQLGSV. The span at 494-510 shows a compositional bias: basic and acidic residues; that stretch reads KDSRPVNDPRQSQEPRR. Asn-561, Asn-578, Asn-591, and Asn-722 each carry an N-linked (GlcNAc...) asparagine glycan. Cys-581 and Cys-637 are disulfide-bonded. Ig-like C2-type domains lie at 754-846 and 852-953; these read PTIR…LVRL and PQVD…VSIS. 2 cysteine pairs are disulfide-bonded: Cys-775–Cys-830 and Cys-877–Cys-934. Residues 957-1051 enclose the Fibronectin type-III domain; that stretch reads PPLGLKVVSV…GIQVSITTPG (95 aa). Positions 1048–1071 are disordered; it reads TTPGLDQAPEDTDQPLPTEQPPGP. Residues 1079–1099 form a helical membrane-spanning segment; that stretch reads VLFAVGGLLLLSNASCVGGLL. At 1100–1256 the chain is on the cytoplasmic side; it reads WRRRLRRLAE…LPFELRGHLV (157 aa). The residue at position 1112 (Ser-1112) is a Phosphoserine. The segment covering 1112-1128 has biased composition (basic and acidic residues); that stretch reads SEKTEAGSEEDRIRNEY. Residues 1112–1143 form a disordered region; it reads SEKTEAGSEEDRIRNEYEESQWTGDRDTRSST. Thr-1115 bears the Phosphothreonine mark. Ser-1119 bears the Phosphoserine mark. Position 1208 is a phosphotyrosine; by FYN (Tyr-1208).

It belongs to the immunoglobulin superfamily. As to quaternary structure, interacts with NPHS2 and with CD2AP (via C-terminal domain). Interacts with MAGI1 (via PDZ 2 and 3 domains) forming a tripartite complex with IGSF5/JAM4. Forms a complex with ACTN4, CASK, IQGAP1, MAGI2, SPTAN1 and SPTBN1. Interacts with DDN; the interaction is direct. Self-associates (via the Ig-like domains). Also interacts (via the Ig-like domains) with KIRREL1 and KIRREL2; the interaction with KIRREL1 is dependent on KIRREL1 glycosylation. Interacts with KIRREL3. Interacts with phosphatidylinositol 3-kinase regulatory subunit PIK3R1; the interaction is reduced by high glucose levels. Post-translationally, phosphorylated at Tyr-1208 by FYN, leading to the recruitment and activation of phospholipase C-gamma-1/PLCG1. Tyrosine phosphorylation is reduced by high glucose levels. Dephosphorylated by tensin TNS2 which leads to reduced binding of NPHN1 to PIK3R1. As to expression, expressed in kidney glomeruli. In the embryo, expressed in the mesonephric kidney at 11 dpc with strong expression in cranial tubules with podocyte-like structures. Expression is observed in the podocytes of the developing kidney from 13 dpc. High expression is also detected in the developing cerebellum, hindbrain, spinal cord, retina and hypothalamus. Expressed in skeletal muscle during myoblast fusion such as in the adult following acute injury and in the embryo but not detected in uninjured adult skeletal muscle. Isoform 1 and isoform 2 are expressed in the newborn brain and developing cerebellum. Isoform 1 is the predominant isoform in adult kidney.

The protein resides in the cell membrane. Its function is as follows. Seems to play a role in the development or function of the kidney glomerular filtration barrier. Regulates glomerular vascular permeability. May anchor the podocyte slit diaphragm to the actin cytoskeleton. Plays a role in skeletal muscle formation through regulation of myoblast fusion. This chain is Nephrin (Nphs1), found in Mus musculus (Mouse).